We begin with the raw amino-acid sequence, 82 residues long: Hepcidin (82 aa).

The N-terminal stretch at 1–23 is a signal peptide; it reads MALSVQIRAACLLLLLLVSLTAG. Positions 24-53 are excised as a propeptide; it reads SVLPSQTRQLTDLRTQDTAGATAGLTPVAQ. Disulfide bonds link Cys64-Cys80, Cys67-Cys70, Cys68-Cys76, and Cys71-Cys79.

The protein belongs to the hepcidin family. In terms of assembly, interacts with SLC40A1; this interaction promotes SLC40A1 rapid ubiquitination.

It is found in the secreted. In terms of biological role, liver-produced hormone that constitutes the main circulating regulator of iron absorption and distribution across tissues. Acts by promoting endocytosis and degradation of ferroportin/SLC40A1, leading to the retention of iron in iron-exporting cells and decreased flow of iron into plasma. Controls the major flows of iron into plasma: absorption of dietary iron in the intestine, recycling of iron by macrophages, which phagocytose old erythrocytes and other cells, and mobilization of stored iron from hepatocytes. Has strong antimicrobial activity against E.coli ML35P N.cinerea and weaker against S.epidermidis, S.aureus and group b streptococcus bacteria. Active against the fungus C.albicans. No activity against P.aeruginosa. This chain is Hepcidin (HAMP), found in Sus scrofa (Pig).